Reading from the N-terminus, the 132-residue chain is Transcriptional regulator MraZ (132 aa).

SpoVT-AbrB domains follow at residues 5-47 and 76-119; these read TYEH…SKDD and TVEI…SKNK.

Belongs to the MraZ family. Forms oligomers.

The protein resides in the cytoplasm. It localises to the nucleoid. The protein is Transcriptional regulator MraZ of Mycoplasma capricolum subsp. capricolum (strain California kid / ATCC 27343 / NCTC 10154).